The primary structure comprises 779 residues: MPTTYVPINQPIGDGEDVIDTNRFTNIPETQNFDQFVTIDKIAEENRPLSVDSDREFLNSKYRHYREVIWDRAKTFITLSSTAIVIGCIAGFLQVFTETLVNWKTGHCQRNWLLNKSFCCNGVVNEVTSTSNLLLKRQEFECEAQGLWIAWKGHVSPFIIFMLLSVLFALISTLLVKYVAPMATGSGISEIKVWVSGFEYNKEFLGFLTLVIKSVALPLAISSGLSVGKEGPSVHYATCCGYLLTKWLLRDTLTYSSQYEYITAASGAGVAVAFGAPIGGVLFGLEEIASANRFNSSTLWKSYYVALVAITTLKYIDPFRNGRVILFNVTYDRDWKVQEIPIFIALGIFGGLYGKYISKWNINFIHFRKMYLSSWPVQEVLFLATLTALISYFNEFLKLDMTESMGILFHECVKNDNTSTFSHRLCQLDENTHAFEFLKIFTSLCFATVIRALLVVVSYGARVPAGIFVPSMAVGATFGRAVSLLVERFISGPSVITPGAYAFLGAAATLSGITNLTLTVVVIMFELTGAFMYIIPLMIVVAITRIILSTSGISGGIADQMIMVNGFPYLEDEQDEEEEETLEKYTAEQLMSSKLITINETIYLSELESLLYDSASEYSVHGFPITKDEDKFEKEKRCIGYVLKRHLASKIMMQSVNSTKAQTTLVYFNKSNEELGHRENCIGFKDIMNESPISVKKAVPVTLLFRMFKELGCKTIIVEESGILKGLVTAKDILRFKRIKYREVHGAKFTYNEALDRRCWSVIHFIIKRFTTNRNGNVI.

Residues 1 to 75 (MPTTYVPINQ…REVIWDRAKT (75 aa)) lie on the Cytoplasmic side of the membrane. The chain crosses the membrane as a helical span at residues 76 to 96 (FITLSSTAIVIGCIAGFLQVF). Over 97–154 (TETLVNWKTGHCQRNWLLNKSFCCNGVVNEVTSTSNLLLKRQEFECEAQGLWIAWKGH) the chain is Lumenal. Residues 155–175 (VSPFIIFMLLSVLFALISTLL) form a helical membrane-spanning segment. Residues 176–177 (VK) are Cytoplasmic-facing. Residues 178–198 (YVAPMATGSGISEIKVWVSGF) traverse the membrane as a helical segment. At 199-203 (EYNKE) the chain is on the lumenal side. The chain crosses the membrane as a helical span at residues 204 to 224 (FLGFLTLVIKSVALPLAISSG). Residues 225-264 (LSVGKEGPSVHYATCCGYLLTKWLLRDTLTYSSQYEYITA) are Cytoplasmic-facing. A helical membrane pass occupies residues 265 to 285 (ASGAGVAVAFGAPIGGVLFGL). At 286 to 296 (EEIASANRFNS) the chain is on the lumenal side. The chain crosses the membrane as a helical span at residues 297–319 (STLWKSYYVALVAITTLKYIDPF). The Cytoplasmic segment spans residues 320–336 (RNGRVILFNVTYDRDWK). The helical transmembrane segment at 337–357 (VQEIPIFIALGIFGGLYGKYI) threads the bilayer. Over 358–369 (SKWNINFIHFRK) the chain is Lumenal. The helical transmembrane segment at 370-390 (MYLSSWPVQEVLFLATLTALI) threads the bilayer. Residues 391–436 (SYFNEFLKLDMTESMGILFHECVKNDNTSTFSHRLCQLDENTHAFE) are Cytoplasmic-facing. Residues 437–457 (FLKIFTSLCFATVIRALLVVV) form a helical membrane-spanning segment. The Lumenal portion of the chain corresponds to 458–465 (SYGARVPA). The helical transmembrane segment at 466-486 (GIFVPSMAVGATFGRAVSLLV) threads the bilayer. Topologically, residues 487–500 (ERFISGPSVITPGA) are cytoplasmic. A helical transmembrane segment spans residues 501–523 (YAFLGAAATLSGITNLTLTVVVI). Topologically, residues 524–529 (MFELTG) are lumenal. The chain crosses the membrane as a helical span at residues 530–552 (AFMYIIPLMIVVAITRIILSTSG). Over 553–779 (ISGGIADQMI…FTTNRNGNVI (227 aa)) the chain is Cytoplasmic. CBS domains lie at 591–659 (MSSK…VNST) and 688–744 (MNES…YREV).

Belongs to the chloride channel (TC 2.A.49) family. Homodimer. Interacts with GET3. Proteolytically processed in the secretory pathway by protease KEX2 within the first extracellular loop. However, both the N- and C-terminal products of the cleavage reaction are required for assembly of a functional channel.

The protein localises to the golgi apparatus membrane. It is found in the endosome membrane. Its subcellular location is the prevacuolar compartment membrane. Its function is as follows. Anion/proton exchange transporter involved in iron and copper cation homeostasis. Involved in intracellular iron metabolism during growth on fermentable and non fermentable carbon sources. Required for proper copper-loading and maturation of multicopper oxidase FET3. Important for adjusting intracellular compartment pH to more alkaline pH under iron limitation. May also transport chloride ions through the plasma membrane. The sequence is that of Anion/proton exchange transporter GEF1 (GEF1) from Saccharomyces cerevisiae (strain ATCC 204508 / S288c) (Baker's yeast).